Reading from the N-terminus, the 335-residue chain is Adenine deaminase (335 aa).

His17, His19, and His197 together coordinate Zn(2+). Residue Glu200 is the Proton donor of the active site. Asp278 is a binding site for Zn(2+). Substrate is bound at residue Asp279.

Belongs to the metallo-dependent hydrolases superfamily. Adenosine and AMP deaminases family. Adenine deaminase type 2 subfamily. Zn(2+) serves as cofactor.

It catalyses the reaction adenine + H2O + H(+) = hypoxanthine + NH4(+). Functionally, catalyzes the hydrolytic deamination of adenine to hypoxanthine. Plays an important role in the purine salvage pathway and in nitrogen catabolism. This is Adenine deaminase from Marinomonas sp. (strain MWYL1).